Here is a 39-residue protein sequence, read N- to C-terminus: Cytochrome b559 subunit beta (39 aa).

Residues 14–30 (WLAVHGLAIPTVFFLGS) form a helical membrane-spanning segment. Position 18 (His18) interacts with heme.

The protein belongs to the PsbE/PsbF family. Heterodimer of an alpha subunit and a beta subunit. PSII is composed of 1 copy each of membrane proteins PsbA, PsbB, PsbC, PsbD, PsbE, PsbF, PsbH, PsbI, PsbJ, PsbK, PsbL, PsbM, PsbT, PsbX, PsbY, PsbZ, Psb30/Ycf12, at least 3 peripheral proteins of the oxygen-evolving complex and a large number of cofactors. It forms dimeric complexes. It depends on heme b as a cofactor.

It localises to the plastid membrane. Functionally, this b-type cytochrome is tightly associated with the reaction center of photosystem II (PSII). PSII is a light-driven water:plastoquinone oxidoreductase that uses light energy to abstract electrons from H(2)O, generating O(2) and a proton gradient subsequently used for ATP formation. It consists of a core antenna complex that captures photons, and an electron transfer chain that converts photonic excitation into a charge separation. In Cuscuta gronovii (Common dodder), this protein is Cytochrome b559 subunit beta.